A 399-amino-acid polypeptide reads, in one-letter code: Zinc finger HIT domain-containing protein 2 (399 aa).

Position 1 is an N-acetylmethionine (Met1). Residues Cys7, Cys10, Cys22, Cys25, Cys30, Cys34, His38, and Cys41 each coordinate Zn(2+). An HIT-type zinc finger spans residues 7–41; it reads CGFCPAGEALPARYTCPRCNAPYCSLRCYRAHGAC. Disordered regions lie at residues 70–97 and 152–175; these read RLRE…GLSG and AEPE…AEPF. Over residues 86–96 the composition is skewed to gly residues; the sequence is LGPGARPGGLS. Thr161 is modified (phosphothreonine).

As to quaternary structure, interacts (via HIT-type zinc finger) with RUVBL2 in the presence of ATP or ADP; shows a stronger interaction in the presence of ADP. In terms of tissue distribution, low expression in most tissues; highly expressed in testis; particularly in seminiferous tubules.

In terms of biological role, may act as a bridging factor mediating the interaction between the R2TP/Prefoldin-like (R2TP/PFDL) complex and U5 small nuclear ribonucleoprotein (U5 snRNP). Required for the interaction of R2TP complex subunit RPAP3 and prefoldin-like subunit URI1 with U5 snRNP proteins EFTUD2 and PRPF8. May play a role in regulating the composition of the U5 snRNP complex. In Mus musculus (Mouse), this protein is Zinc finger HIT domain-containing protein 2 (Znhit2).